The chain runs to 547 residues: Rho GTPase-activating protein 36 (547 aa).

The signal sequence occupies residues 1-40 (MGGCNPFLKAARTLCPRIMPPLLFLSAFIFLVNVLGGAPG). Residues 226–426 (MSLNPIAKQI…AMIDNWDILF (201 aa)) form the Rho-GAP domain. A disordered region spans residues 493-547 (FDEGSSEEPAVPPGTAHSHDDEEGAGNPPIPEQDRPLLRVPREKQAKTGIGYFFP). A compositionally biased stretch (basic and acidic residues) spans 524-538 (EQDRPLLRVPREKQA).

GTPase activator for the Rho-type GTPases by converting them to an inactive GDP-bound state. This chain is Rho GTPase-activating protein 36 (ARHGAP36), found in Ailuropoda melanoleuca (Giant panda).